The sequence spans 100 residues: Putative protein adenylyltransferase MJ0604 (100 aa).

The short motif at 29-43 is the GSX(10)DXD motif element; sequence GSYARGDYTEESDID. Aspartate 41 and aspartate 43 together coordinate Mg(2+).

Belongs to the MntA antitoxin family. The cofactor is Mg(2+).

The enzyme catalyses L-tyrosyl-[protein] + ATP = O-(5'-adenylyl)-L-tyrosyl-[protein] + diphosphate. The catalysed reaction is O-(5'-adenylyl)-L-tyrosyl-[protein] + ATP = O-[5'-(adenylyl-(5'-&gt;3')-adenylyl)]-L-tyrosyl-[protein] + diphosphate. Its function is as follows. Putative antitoxin component of a putative type VII toxin-antitoxin (TA) system. Its cognate toxin might be MJ0605, which it might AMPylate. The polypeptide is Putative protein adenylyltransferase MJ0604 (Methanocaldococcus jannaschii (strain ATCC 43067 / DSM 2661 / JAL-1 / JCM 10045 / NBRC 100440) (Methanococcus jannaschii)).